A 1020-amino-acid chain; its full sequence is Calcium-transporting ATPase 1 (1020 aa).

Met1 bears the N-acetylmethionine mark. The Stromal portion of the chain corresponds to 1–162; sequence MESYLNENFG…NQFTESPSRG (162 aa). An interaction with calmodulin region spans residues 21–32; that stretch reads ALQRWRKLCWIV. Ser46 carries the phosphoserine; by CPK modification. A helical membrane pass occupies residues 163 to 183; it reads FWLFVWEALQDTTLMILAACA. Residues 184–201 lie on the Lumenal side of the membrane; sequence FVSLIVGILMEGWPIGAH. A helical transmembrane segment spans residues 202-222; that stretch reads DGLGIVASILLVVFVTATSDY. At 223–350 the chain is on the stromal side; the sequence is RQSLQFKDLD…DDETPLQVKL (128 aa). The chain crosses the membrane as a helical span at residues 351–370; sequence NGVATIIGKIGLFFAVITFA. The Lumenal portion of the chain corresponds to 371 to 400; the sequence is VLVQGLANQKRLDNSHWIWTADELMAMLEY. The helical transmembrane segment at 401 to 418 threads the bilayer; sequence FAVAVTIVVVAVPEGLPL. Topologically, residues 419–813 are stromal; that stretch reads AVTLSLAFAM…KWGRSVYINI (395 aa). The active-site 4-aspartylphosphate intermediate is the Asp456. 2 residues coordinate Mg(2+): Asp758 and Asp762. The helical transmembrane segment at 814–832 threads the bilayer; it reads QKFVQFQLTVNVVALIVNF. Residues 833-843 lie on the Lumenal side of the membrane; sequence LSACLTGNAPL. Residues 844 to 864 form a helical membrane-spanning segment; it reads TAVQLLWVNMIMDTLGALALA. At 865–884 the chain is on the stromal side; that stretch reads TEPPQDDLMKRSPVGRKGNF. The chain crosses the membrane as a helical span at residues 885–907; the sequence is ISNVMWRNILGQSLYQLVIIWCL. The Lumenal portion of the chain corresponds to 908–919; it reads QTKGKTMFGLDG. A helical transmembrane segment spans residues 920–941; the sequence is PDSDLTLNTLIFNIFVFCQVFN. Over 942 to 959 the chain is Stromal; the sequence is EISSREMEKIDVFKGILK. The chain crosses the membrane as a helical span at residues 960–981; the sequence is NYVFVAVLTCTVVFQVIIIELL. Residues 982-991 lie on the Lumenal side of the membrane; that stretch reads GTFADTTPLN. The chain crosses the membrane as a helical span at residues 992-1013; the sequence is LGQWLVSIILGFLGMPVAAALK. The Stromal segment spans residues 1014–1020; sequence MIPVGSH.

Belongs to the cation transport ATPase (P-type) (TC 3.A.3) family. Type IIB subfamily. In terms of tissue distribution, expressed at higher levels in roots than in leaves.

Its subcellular location is the plastid. The protein resides in the chloroplast inner membrane. The catalysed reaction is Ca(2+)(in) + ATP + H2O = Ca(2+)(out) + ADP + phosphate + H(+). Activated by calmodulin. This magnesium-dependent enzyme catalyzes the hydrolysis of ATP coupled with the translocation of calcium from the cytosol out of the cell or into organelles. This Arabidopsis thaliana (Mouse-ear cress) protein is Calcium-transporting ATPase 1 (ACA1).